We begin with the raw amino-acid sequence, 397 residues long: Tryptophan synthase beta chain (397 aa).

Lysine 87 carries the post-translational modification N6-(pyridoxal phosphate)lysine.

It belongs to the TrpB family. Tetramer of two alpha and two beta chains. Pyridoxal 5'-phosphate serves as cofactor.

The enzyme catalyses (1S,2R)-1-C-(indol-3-yl)glycerol 3-phosphate + L-serine = D-glyceraldehyde 3-phosphate + L-tryptophan + H2O. The protein operates within amino-acid biosynthesis; L-tryptophan biosynthesis; L-tryptophan from chorismate: step 5/5. Its function is as follows. The beta subunit is responsible for the synthesis of L-tryptophan from indole and L-serine. This is Tryptophan synthase beta chain from Cronobacter sakazakii (strain ATCC BAA-894) (Enterobacter sakazakii).